We begin with the raw amino-acid sequence, 251 residues long: Tyrosine transport ATP-binding protein (251 aa).

The ABC transporter domain occupies 2 to 248; the sequence is LQIKNLSKSF…TVEEILEKFE (247 aa). 39 to 46 contacts ATP; it reads GSNGTGKS.

Belongs to the ABC transporter superfamily. The complex is probably composed of two ATP-binding proteins (CDR20291_0806), two transmembrane proteins (CDR20291_0807) and a solute-binding protein (CDR20291_0805).

It is found in the cell membrane. The enzyme catalyses L-tyrosine(out) + ATP + H2O = L-tyrosine(in) + ADP + phosphate + H(+). Its function is as follows. Probably part of an ABC transporter complex involved in tyrosine uptake. May also import phenylalanine. Probably responsible for energy coupling to the transport system. In Clostridioides difficile (strain R20291) (Peptoclostridium difficile), this protein is Tyrosine transport ATP-binding protein.